Reading from the N-terminus, the 798-residue chain is Cold shock domain-containing protein E1 (798 aa).

The 62-residue stretch at E26–L87 folds into the CSD 1 domain. K81 carries the N6-acetyllysine modification. Residue K91 forms a Glycyl lysine isopeptide (Lys-Gly) (interchain with G-Cter in SUMO2) linkage. At S123 the chain carries Phosphoserine. The CSD 2; truncated domain maps to V136 to L179. The CSD 3 domain maps to C186–V245. The residue at position 276 (S276) is a Phosphoserine. Positions L297–L337 constitute a CSD 4; truncated domain. 2 CSD domains span residues E349–I410 and N447–V507. At S514 the chain carries Phosphoserine. The 61-residue stretch at L519–V579 folds into the CSD 7 domain. S584 bears the Phosphoserine mark. CSD domains lie at P610 to I670 and R674 to V735. Positions P748–R789 constitute an SUZ-C domain. The residue at position 761 (T761) is a Phosphothreonine.

It belongs to the UNR family. In terms of assembly, component of a multi subunit autoregulatory ribonucleoprotein complex (ARC), at least composed of IGF2BP1, PABPC1 and CSDE1. Interacts with STRAP. Part of a complex associated with the FOS mCRD domain and consisting of PABPC1, PAIP1, HNRPD and SYNCRIP. The interaction with PABPC1 is direct and RNA-independent. Interacts with EIF4ENIF1/4E-T.

The protein resides in the cytoplasm. It is found in the stress granule. Its subcellular location is the P-body. In terms of biological role, RNA-binding protein involved in translationally coupled mRNA turnover. Implicated with other RNA-binding proteins in the cytoplasmic deadenylation/translational and decay interplay of the FOS mRNA mediated by the major coding-region determinant of instability (mCRD) domain. Required for efficient formation of stress granules. In Mus musculus (Mouse), this protein is Cold shock domain-containing protein E1.